A 294-amino-acid polypeptide reads, in one-letter code: Cytidine deaminase (294 aa).

CMP/dCMP-type deaminase domains lie at Asp48–Lys168 and Leu186–Gly294. Substrate is bound at residue Asn89–Glu91. His102 contributes to the Zn(2+) binding site. The active-site Proton donor is the Glu104. Zn(2+) contacts are provided by Cys129 and Cys132.

The protein belongs to the cytidine and deoxycytidylate deaminase family. In terms of assembly, homodimer. The cofactor is Zn(2+).

The enzyme catalyses cytidine + H2O + H(+) = uridine + NH4(+). The catalysed reaction is 2'-deoxycytidine + H2O + H(+) = 2'-deoxyuridine + NH4(+). This enzyme scavenges exogenous and endogenous cytidine and 2'-deoxycytidine for UMP synthesis. The chain is Cytidine deaminase from Citrobacter koseri (strain ATCC BAA-895 / CDC 4225-83 / SGSC4696).